The following is a 51-amino-acid chain: FVNQHLCGSHLVEALYLVCGERGFFYTPKTGIVEQCCTGVCSLYQLENYCN.

3 cysteine pairs are disulfide-bonded: cysteine 7–cysteine 37, cysteine 19–cysteine 50, and cysteine 36–cysteine 41.

It belongs to the insulin family. Heterodimer of a B chain and an A chain linked by two disulfide bonds.

It localises to the secreted. In terms of biological role, insulin decreases blood glucose concentration. It increases cell permeability to monosaccharides, amino acids and fatty acids. It accelerates glycolysis, the pentose phosphate cycle, and glycogen synthesis in liver. The chain is Insulin (INS) from Elephas maximus (Indian elephant).